The chain runs to 156 residues: FUN14 domain-containing protein 1 (156 aa).

The YXXL motif lies at 19–22 (YEVL). 3 helical membrane-spanning segments follow: residues 49-69 (YSVA…GFLF), 76-96 (AATA…SGYV), and 135-155 (FIKQ…LGLA).

Belongs to the FUN14 family.

The protein localises to the mitochondrion outer membrane. Acts as an activator of hypoxia-induced mitophagy, an important mechanism for mitochondrial quality control. This is FUN14 domain-containing protein 1 (FUNDC1) from Gallus gallus (Chicken).